The sequence spans 382 residues: Proton extrusion protein PxcA (382 aa).

The next 4 membrane-spanning stretches (helical) occupy residues 156–176, 257–277, 305–325, and 340–360; these read TLIS…VQQV, AVKN…VCLF, IILF…TVLL, and FILL…KYWI.

Belongs to the CemA family.

The protein resides in the cell inner membrane. Functionally, required for H(+) efflux immediately after light irradiation to form a rapid H(+) concentration gradient across the thylakoid membranes. Together with PxcL, contributes to transient H(+) uptake following dark to light transition. The chain is Proton extrusion protein PxcA from Synechococcus sp. (strain CC9311).